The sequence spans 302 residues: Endochitinase 2 (302 aa).

Residues 1–42 (EQCGRQAGGALCPGGLCCSQFGWCGSTADYCTVPGCQSQCSG) enclose the Chitin-binding type-1 domain. 7 cysteine pairs are disulfide-bonded: Cys3-Cys18, Cys12-Cys24, Cys17-Cys31, Cys36-Cys40, Cys73-Cys136, Cys148-Cys156, and Cys255-Cys287. Glu117 serves as the catalytic Proton donor. Positions 296–302 (GVSVDSM) are cleaved as a propeptide — removed in mature form.

The protein belongs to the glycosyl hydrolase 19 family. Chitinase class I subfamily.

It carries out the reaction Random endo-hydrolysis of N-acetyl-beta-D-glucosaminide (1-&gt;4)-beta-linkages in chitin and chitodextrins.. Defense against chitin-containing fungal pathogens. In Gossypium hirsutum (Upland cotton), this protein is Endochitinase 2.